A 313-amino-acid polypeptide reads, in one-letter code: Olfactory receptor 1J1 (313 aa).

Residues 1–25 (MRLKNHSSVSEFLLLGFPIRPEQGG) are Extracellular-facing. A glycan (N-linked (GlcNAc...) asparagine) is linked at Asn-5. A helical transmembrane segment spans residues 26–46 (IFFSLFLAMYLITVLGNLLII). The Cytoplasmic segment spans residues 47 to 57 (LLIRLDSHLHT). The helical transmembrane segment at 58-78 (PMYFFLSHLAFTDISFSSVTV) threads the bilayer. Residues 79 to 97 (PKMLTKVQNQPIPITYEEC) are Extracellular-facing. An intrachain disulfide couples Cys-97 to Cys-189. Residues 98–118 (VSQTYFFIFFADLDSFLITSM) traverse the membrane as a helical segment. Residues 119 to 142 (AYDRYMAICHPLHYITIMSQSRCA) are Cytoplasmic-facing. The chain crosses the membrane as a helical span at residues 143–163 (MLVAVSWVIASACALLHSLLL). The Extracellular segment spans residues 164 to 196 (DQLSFCADHTVPHFFCDLGALLKLSCSDTSLNQ). The helical transmembrane segment at 197–217 (LVIFTAGLAAIMLPFLCILIS) threads the bilayer. Residues 218-240 (YGRIGFTILQVPTTKGICKALST) lie on the Cytoplasmic side of the membrane. Residues 241–261 (CGSHLSVVALYYGSIIGLYFL) form a helical membrane-spanning segment. Over 262-271 (PPSNSKINNN) the chain is Extracellular. Residues 272–292 (IVASVMYTVVTPMLNPFIYSL) form a helical membrane-spanning segment. Residues 293–313 (RNKDMKGALKKLLSKKTEFSK) are Cytoplasmic-facing.

Belongs to the G-protein coupled receptor 1 family.

The protein localises to the cell membrane. In terms of biological role, odorant receptor. In Mus musculus (Mouse), this protein is Olfactory receptor 1J1.